Here is an 89-residue protein sequence, read N- to C-terminus: DNA-directed RNA polymerase subunit omega (89 aa).

This sequence belongs to the RNA polymerase subunit omega family. The RNAP catalytic core consists of 2 alpha, 1 beta, 1 beta' and 1 omega subunit. When a sigma factor is associated with the core the holoenzyme is formed, which can initiate transcription.

It carries out the reaction RNA(n) + a ribonucleoside 5'-triphosphate = RNA(n+1) + diphosphate. Promotes RNA polymerase assembly. Latches the N- and C-terminal regions of the beta' subunit thereby facilitating its interaction with the beta and alpha subunits. The protein is DNA-directed RNA polymerase subunit omega (rpoZ) of Pasteurella multocida (strain Pm70).